The primary structure comprises 674 residues: Penicillin-binding protein activator LpoA (674 aa).

Residues 1-31 (MLSSTFVRTKAGRSKPVRLTAVIAAALFLAG) form the signal peptide. Cysteine 32 carries the N-palmitoyl cysteine lipid modification. Residue cysteine 32 is the site of S-diacylglycerol cysteine attachment. Residues 291–349 (GVTPSTPVQQQQPASVPEQAAQPASTDPNANGAVSTSAPDAAPVTAAQPSAPSTAPITP) form a disordered region. The span at 292-315 (VTPSTPVQQQQPASVPEQAAQPAS) shows a compositional bias: low complexity. Polar residues predominate over residues 316–328 (TDPNANGAVSTSA). The segment covering 331-349 (AAPVTAAQPSAPSTAPITP) has biased composition (low complexity).

Belongs to the LpoA family. As to quaternary structure, interacts with PBP1a.

Its subcellular location is the cell outer membrane. Its function is as follows. Regulator of peptidoglycan synthesis that is essential for the function of penicillin-binding protein 1A (PBP1a). The protein is Penicillin-binding protein activator LpoA of Serratia proteamaculans (strain 568).